Here is a 406-residue protein sequence, read N- to C-terminus: Histone-lysine N-methyltransferase SUV39H2 (406 aa).

One can recognise a Chromo domain in the interval 43-101 (YEVEYLCDYRIEKGVEKFFVKWKGWPESCNTWEPTRNLKCPTLLKQFYSDLYNYFCALK). Residues 185–243 (VGCDCSDCFKGKCCPTEAGVLFAYNEHRQIKIPPGRPIYECNSRCKCGPDCPNRVVQKG) form the Pre-SET domain. Cys-187, Cys-189, Cys-192, Cys-197, Cys-198, Cys-225, Cys-229, Cys-231, and Cys-235 together coordinate Zn(2+). Positions 246–369 (YSLCIFRTDN…AGEELTFDYQ (124 aa)) constitute an SET domain. S-adenosyl-L-methionine is bound by residues 257-259 (RGW), Tyr-300, and 326-327 (NH). Cys-329, Cys-394, Cys-396, and Cys-401 together coordinate Zn(2+). Residues 390–406 (VRIACKCGAATCRGYLN) form the Post-SET domain.

Belongs to the class V-like SAM-binding methyltransferase superfamily. Histone-lysine methyltransferase family. Suvar3-9 subfamily.

The protein resides in the nucleus. The protein localises to the chromosome. It localises to the centromere. The enzyme catalyses L-lysyl(9)-[histone H3] + 3 S-adenosyl-L-methionine = N(6),N(6),N(6)-trimethyl-L-lysyl(9)-[histone H3] + 3 S-adenosyl-L-homocysteine + 3 H(+). Histone methyltransferase that specifically trimethylates 'Lys-9' of histone H3 using monomethylated H3 'Lys-9' as substrate. H3 'Lys-9' trimethylation represents a specific tag for epigenetic transcriptional repression by recruiting HP1 (CBX1, CBX3 and/or CBX5) proteins to methylated histones. Mainly functions in heterochromatin regions, thereby playing a central role in the establishment of constitutive heterochromatin at pericentric and telomere regions. H3 'Lys-9' trimethylation is also required to direct DNA methylation at pericentric repeats. SUV39H1 is targeted to histone H3 via its interaction with RB1 and is involved in many processes. This chain is Histone-lysine N-methyltransferase SUV39H2 (suv39h2), found in Xenopus tropicalis (Western clawed frog).